A 185-amino-acid chain; its full sequence is dCTP deaminase (185 aa).

Residues 107 to 112, 131 to 133, Gln152, Tyr166, and Gln176 each bind dCTP; these read KSTYAR and TLE. The active-site Proton donor/acceptor is Glu133.

This sequence belongs to the dCTP deaminase family. As to quaternary structure, homotrimer.

It catalyses the reaction dCTP + H2O + H(+) = dUTP + NH4(+). It participates in pyrimidine metabolism; dUMP biosynthesis; dUMP from dCTP (dUTP route): step 1/2. Functionally, catalyzes the deamination of dCTP to dUTP. The sequence is that of dCTP deaminase from Anaplasma marginale (strain Florida).